Here is a 409-residue protein sequence, read N- to C-terminus: NADH-quinone oxidoreductase subunit D 1 (409 aa).

It belongs to the complex I 49 kDa subunit family. NDH-1 is composed of 14 different subunits. Subunits NuoB, C, D, E, F, and G constitute the peripheral sector of the complex.

The protein resides in the cell inner membrane. It catalyses the reaction a quinone + NADH + 5 H(+)(in) = a quinol + NAD(+) + 4 H(+)(out). Functionally, NDH-1 shuttles electrons from NADH, via FMN and iron-sulfur (Fe-S) centers, to quinones in the respiratory chain. The immediate electron acceptor for the enzyme in this species is believed to be ubiquinone. Couples the redox reaction to proton translocation (for every two electrons transferred, four hydrogen ions are translocated across the cytoplasmic membrane), and thus conserves the redox energy in a proton gradient. The chain is NADH-quinone oxidoreductase subunit D 1 from Solibacter usitatus (strain Ellin6076).